Here is a 392-residue protein sequence, read N- to C-terminus: Formate-dependent phosphoribosylglycinamide formyltransferase (392 aa).

Residues glutamate 20–leucine 21 and glutamate 80 contribute to the N(1)-(5-phospho-beta-D-ribosyl)glycinamide site. Residues arginine 112, lysine 153, serine 158–glutamine 163, glutamate 193–isoleucine 196, and glutamate 201 contribute to the ATP site. Residues arginine 117–leucine 306 form the ATP-grasp domain. Mg(2+) is bound by residues glutamate 265 and glutamate 277. N(1)-(5-phospho-beta-D-ribosyl)glycinamide-binding positions include aspartate 284, lysine 354, and arginine 361–arginine 362.

The protein belongs to the PurK/PurT family. As to quaternary structure, homodimer.

The enzyme catalyses N(1)-(5-phospho-beta-D-ribosyl)glycinamide + formate + ATP = N(2)-formyl-N(1)-(5-phospho-beta-D-ribosyl)glycinamide + ADP + phosphate + H(+). The protein operates within purine metabolism; IMP biosynthesis via de novo pathway; N(2)-formyl-N(1)-(5-phospho-D-ribosyl)glycinamide from N(1)-(5-phospho-D-ribosyl)glycinamide (formate route): step 1/1. Its function is as follows. Involved in the de novo purine biosynthesis. Catalyzes the transfer of formate to 5-phospho-ribosyl-glycinamide (GAR), producing 5-phospho-ribosyl-N-formylglycinamide (FGAR). Formate is provided by PurU via hydrolysis of 10-formyl-tetrahydrofolate. The protein is Formate-dependent phosphoribosylglycinamide formyltransferase of Shewanella amazonensis (strain ATCC BAA-1098 / SB2B).